The chain runs to 293 residues: MEHLLSMEHLSNSEIYDLITIACQFKSGERPLPQFNGQYVSNLFFENSTRTKCSFEMAEQKLGLKLINFETSTSSVKKGESLYDTCKTLESIGVDLLVIRHSQNSYYEELNQLNIPIANAGDGSGQHPTQSLLDIMTIYEEYGSFEGLNILICGDIKNSRVARSNYHSLTSLGANVMFSSPKEWVDNTLEAPYVEIDEVIDKVDIVMLLRVQHERHGISGEANFAAEEYHQQFGLTQARYDKLKEEAIVMHPAPVNRGVEIKSELVEAPKSRIFKQMENGMYLRMAVISALLQ.

Carbamoyl phosphate is bound by residues R50 and T51. Residue K78 participates in L-aspartate binding. Positions 100, 127, and 130 each coordinate carbamoyl phosphate. L-aspartate contacts are provided by R160 and R210. Carbamoyl phosphate contacts are provided by A253 and P254.

This sequence belongs to the aspartate/ornithine carbamoyltransferase superfamily. ATCase family. As to quaternary structure, heterododecamer (2C3:3R2) of six catalytic PyrB chains organized as two trimers (C3), and six regulatory PyrI chains organized as three dimers (R2).

The enzyme catalyses carbamoyl phosphate + L-aspartate = N-carbamoyl-L-aspartate + phosphate + H(+). It participates in pyrimidine metabolism; UMP biosynthesis via de novo pathway; (S)-dihydroorotate from bicarbonate: step 2/3. Its function is as follows. Catalyzes the condensation of carbamoyl phosphate and aspartate to form carbamoyl aspartate and inorganic phosphate, the committed step in the de novo pyrimidine nucleotide biosynthesis pathway. The polypeptide is Aspartate carbamoyltransferase catalytic subunit (Staphylococcus epidermidis (strain ATCC 35984 / DSM 28319 / BCRC 17069 / CCUG 31568 / BM 3577 / RP62A)).